The sequence spans 655 residues: p-hydroxybenzoic acid efflux pump subunit AaeB (655 aa).

The next 11 membrane-spanning stretches (helical) occupy residues 13 to 33 (FAVKLATAIVLALFVGFHFQL), 38 to 58 (WAVLTAAIVAAGPAFAAGGEP), 69 to 89 (LRIIGTFIGCIAGLVIIIAMI), 93 to 113 (LLMILVCCIWAGFCTWISSLV), 121 to 141 (WGLAGYTALIIVITIQPEPLL), 152 to 172 (EIVIGIVCAIMADLLFSPRSI), 370 to 390 (LFWLWTGWTSGSGAMVMIAVV), 407 to 427 (FIYGTLAALPLGLLYFLVIIP), 431 to 451 (QSMLLLCISLAVLGFFLGIEV), 459 to 479 (MGALASTINIIVLDNPMTFHF), and 482 to 502 (FLDSALGQIVGCVLAFTVILL).

The protein belongs to the aromatic acid exporter ArAE (TC 2.A.85) family.

It is found in the cell inner membrane. Its function is as follows. Forms an efflux pump with AaeA. Could function as a metabolic relief valve, allowing to eliminate certain compounds when they accumulate to high levels in the cell. This Escherichia coli O7:K1 (strain IAI39 / ExPEC) protein is p-hydroxybenzoic acid efflux pump subunit AaeB.